The following is a 451-amino-acid chain: Endosomal transmembrane epsin interactor 1 (451 aa).

A signal peptide spans M1–G29. Topologically, residues A30–K85 are lumenal. The helical transmembrane segment at V86–A106 threads the bilayer. Residues L107 to L451 are Cytoplasmic-facing. A mediates interaction with EPN1 region spans residues L107–L451. Short sequence motifs (PPxY; mediates interaction with ITCH) lie at residues P148–Y151 and P194–Y197. The span at T204–Q213 shows a compositional bias: polar residues. A disordered region spans residues T204–P224. K274 is covalently cross-linked (Glycyl lysine isopeptide (Lys-Gly) (interchain with G-Cter in ubiquitin)). S275 bears the Phosphoserine mark. K365 participates in a covalent cross-link: Glycyl lysine isopeptide (Lys-Gly) (interchain with G-Cter in ubiquitin).

This sequence belongs to the ENTREP family. As to quaternary structure, interacts with ITCH; enhances the ubiquitination of CXCR4 by ITCH and the subsequent endocytosis and desensitization of the receptor. Interacts with EPN1.

Its subcellular location is the early endosome membrane. It is found in the late endosome membrane. The protein resides in the recycling endosome membrane. It localises to the cell membrane. Its function is as follows. Functions as an activator of the E3 ubiquitin protein ligase ITCH in the ubiquitination of the CXCL12-activated CXCR4 receptor. Thereby, triggers CXCR4 endocytosis and desensitization, negatively regulating the CXCL12/CXCR4 signaling pathway. This is Endosomal transmembrane epsin interactor 1 from Mus musculus (Mouse).